Here is a 328-residue protein sequence, read N- to C-terminus: Methionyl-tRNA formyltransferase (328 aa).

110–113 (SLLP) contributes to the (6S)-5,6,7,8-tetrahydrofolate binding site.

This sequence belongs to the Fmt family.

The enzyme catalyses L-methionyl-tRNA(fMet) + (6R)-10-formyltetrahydrofolate = N-formyl-L-methionyl-tRNA(fMet) + (6S)-5,6,7,8-tetrahydrofolate + H(+). Attaches a formyl group to the free amino group of methionyl-tRNA(fMet). The formyl group appears to play a dual role in the initiator identity of N-formylmethionyl-tRNA by promoting its recognition by IF2 and preventing the misappropriation of this tRNA by the elongation apparatus. The polypeptide is Methionyl-tRNA formyltransferase (Prochlorococcus marinus (strain MIT 9312)).